A 380-amino-acid polypeptide reads, in one-letter code: Cytochrome b (380 aa).

Transmembrane regions (helical) follow at residues 34 to 54 (FGSLLGICLTTQILTGLLLAM), 78 to 99 (WLIRNMHANGASLLFICIYLHI), 114 to 134 (WNTGVILLLTLMATAFVGYVL), and 179 to 199 (FFALHFLLPFMITGLTLIHLT). Residues His84 and His98 each contribute to the heme b site. 2 residues coordinate heme b: His183 and His197. Residue His202 coordinates a ubiquinone. 4 consecutive transmembrane segments (helical) span residues 227 to 247 (TKDILGFTLMLLPLTTLALFS), 289 to 309 (LGGVLALAASVLVLFLSPLLH), 321 to 341 (LSQLLFWTLVANLLILTWIGS), and 348 to 368 (FIIIGQLASTTYFIILLILFP).

This sequence belongs to the cytochrome b family. As to quaternary structure, the cytochrome bc1 complex contains 11 subunits: 3 respiratory subunits (MT-CYB, CYC1 and UQCRFS1), 2 core proteins (UQCRC1 and UQCRC2) and 6 low-molecular weight proteins (UQCRH/QCR6, UQCRB/QCR7, UQCRQ/QCR8, UQCR10/QCR9, UQCR11/QCR10 and a cleavage product of UQCRFS1). This cytochrome bc1 complex then forms a dimer. The cofactor is heme b.

Its subcellular location is the mitochondrion inner membrane. In terms of biological role, component of the ubiquinol-cytochrome c reductase complex (complex III or cytochrome b-c1 complex) that is part of the mitochondrial respiratory chain. The b-c1 complex mediates electron transfer from ubiquinol to cytochrome c. Contributes to the generation of a proton gradient across the mitochondrial membrane that is then used for ATP synthesis. In Pygoscelis antarcticus (Chinstrap penguin), this protein is Cytochrome b (MT-CYB).